Here is a 432-residue protein sequence, read N- to C-terminus: Cytochrome c biogenesis protein CcsB (432 aa).

A run of 3 helical transmembrane segments spans residues 18 to 38, 76 to 96, and 166 to 186; these read LRLA…GTGI, SGWF…CSWR, and VGPL…AWGA.

This sequence belongs to the Ccs1/CcsB family. As to quaternary structure, may interact with CcsA.

Its subcellular location is the cellular thylakoid membrane. Required during biogenesis of c-type cytochromes (cytochrome c6 and cytochrome f) at the step of heme attachment. The protein is Cytochrome c biogenesis protein CcsB of Synechococcus sp. (strain CC9605).